A 2074-amino-acid chain; its full sequence is Cell adhesion molecule Dscam2 (2074 aa).

The signal sequence occupies residues 1-21 (MWISSRFFVILLLLNLDNTCS). The Extracellular segment spans residues 22–1619 (EPFEAHLRGP…QTTVIFANIN (1598 aa)). 8 Ig-like C2-type domains span residues 31 to 120 (PGFV…RIVS), 238 to 326 (PSVV…LRLT), 330 to 417 (PIQV…AELQ), 422 to 516 (PPVL…ARLN), 521 to 607 (PYIR…GEVT), 612 to 698 (PSIE…IKYT), 707 to 802 (PRWI…LKVN), and 805 to 902 (PYFS…LQVQ). Disulfide bonds link cysteine 53-cysteine 109, cysteine 259-cysteine 310, cysteine 352-cysteine 400, cysteine 444-cysteine 500, cysteine 541-cysteine 590, cysteine 633-cysteine 686, cysteine 728-cysteine 783, and cysteine 826-cysteine 884. Fibronectin type-III domains lie at 907–1003 (PPSV…TEPQ), 1008–1108 (PPLS…TMED), 1113–1211 (PPED…SEED), and 1215–1311 (APAD…TNRI). In terms of domain architecture, Ig-like C2-type 9 spans 1312–1400 (PARIISFGGP…DRLTHTLIVQ (89 aa)). Cysteine 1334 and cysteine 1382 are oxidised to a cystine. Fibronectin type-III domains are found at residues 1402 to 1495 (PPTA…TQGQ) and 1496 to 1595 (SPGH…TKDG). The chain crosses the membrane as a helical span at residues 1620–1640 (LLIPTIAAVSGMFCTIIMIIV). The Cytoplasmic segment spans residues 1641–2074 (CYRHMLKNAP…KFFTAPTLPK (434 aa)). 4 disordered regions span residues 1739–1766 (EGCSSPPPAAVLNPPTTTTHHHHHHQRP), 1778–1917 (PFHN…KSIS), 1936–1974 (SPSISTQQQKQFHKQQLQNSSTNNSQHSSSNPNSSSLKQ), and 2011–2074 (PSSQ…TLPK). Basic residues predominate over residues 1757–1766 (THHHHHHQRP). Residues 1831–1846 (AQSSTSSDLSPMSEQK) are compositionally biased toward polar residues. Residues 1848 to 1858 (LPRRGRSRYHH) are compositionally biased toward basic residues. A compositionally biased stretch (polar residues) spans 1859–1868 (QQYQFSTNTT). Composition is skewed to low complexity over residues 1875–1903 (NKMNNNTTSNTNTTATNTTATPSTSSNSN), 1942–1974 (QQQKQFHKQQLQNSSTNNSQHSSSNPNSSSLKQ), and 2036–2051 (SQQSHPHQQQQQQQHP). A compositionally biased stretch (polar residues) spans 2055-2066 (LNPSTAMLSSKF).

The protein localises to the membrane. Cell adhesion molecule. The polypeptide is Cell adhesion molecule Dscam2 (Dscam2) (Drosophila melanogaster (Fruit fly)).